The following is a 189-amino-acid chain: Thymidine kinase (189 aa).

Residues 9-16 (GTMNSGKT) and 85-88 (DESQ) each bind ATP. Glutamate 86 acts as the Proton acceptor in catalysis. 4 residues coordinate Zn(2+): cysteine 143, cysteine 146, cysteine 180, and histidine 183.

This sequence belongs to the thymidine kinase family. As to quaternary structure, homotetramer.

It is found in the cytoplasm. It carries out the reaction thymidine + ATP = dTMP + ADP + H(+). This Streptococcus pyogenes serotype M18 (strain MGAS8232) protein is Thymidine kinase.